We begin with the raw amino-acid sequence, 332 residues long: GTP 3',8-cyclase (332 aa).

The 212-residue stretch at 9-220 (GYNRRVDYLR…TQVRERIAER (212 aa)) folds into the Radical SAM core domain. Arg18 contacts GTP. Cys25 and Cys29 together coordinate [4Fe-4S] cluster. Residue Tyr31 participates in S-adenosyl-L-methionine binding. Cys32 contributes to the [4Fe-4S] cluster binding site. Arg67 contributes to the GTP binding site. Gly71 lines the S-adenosyl-L-methionine pocket. Residue Thr98 coordinates GTP. Residue Ser122 coordinates S-adenosyl-L-methionine. GTP is bound at residue Lys159. Met193 contributes to the S-adenosyl-L-methionine binding site. Positions 258 and 261 each coordinate [4Fe-4S] cluster. 263–265 (RVR) contacts GTP. Cys275 lines the [4Fe-4S] cluster pocket.

Belongs to the radical SAM superfamily. MoaA family. In terms of assembly, monomer and homodimer. [4Fe-4S] cluster serves as cofactor.

It catalyses the reaction GTP + AH2 + S-adenosyl-L-methionine = (8S)-3',8-cyclo-7,8-dihydroguanosine 5'-triphosphate + 5'-deoxyadenosine + L-methionine + A + H(+). The protein operates within cofactor biosynthesis; molybdopterin biosynthesis. Catalyzes the cyclization of GTP to (8S)-3',8-cyclo-7,8-dihydroguanosine 5'-triphosphate. The protein is GTP 3',8-cyclase of Pseudomonas fluorescens (strain Pf0-1).